Reading from the N-terminus, the 295-residue chain is Ribosomal RNA small subunit methyltransferase A (295 aa).

The S-adenosyl-L-methionine site is built by N40, V42, G67, E88, D118, and N135.

This sequence belongs to the class I-like SAM-binding methyltransferase superfamily. rRNA adenine N(6)-methyltransferase family. RsmA subfamily.

The protein localises to the cytoplasm. It carries out the reaction adenosine(1518)/adenosine(1519) in 16S rRNA + 4 S-adenosyl-L-methionine = N(6)-dimethyladenosine(1518)/N(6)-dimethyladenosine(1519) in 16S rRNA + 4 S-adenosyl-L-homocysteine + 4 H(+). Its function is as follows. Specifically dimethylates two adjacent adenosines (A1518 and A1519) in the loop of a conserved hairpin near the 3'-end of 16S rRNA in the 30S particle. May play a critical role in biogenesis of 30S subunits. This chain is Ribosomal RNA small subunit methyltransferase A, found in Arthrobacter sp. (strain FB24).